The primary structure comprises 296 residues: Antisense-enhancing sequence 1 (296 aa).

The active site involves Glu47.

This sequence belongs to the PhzF family.

May have isomerase activity. Enhances target gene silencing when coexpressed with antisense RNA. This Schizosaccharomyces pombe (strain 972 / ATCC 24843) (Fission yeast) protein is Antisense-enhancing sequence 1 (aes1).